Consider the following 443-residue polypeptide: Tol-Pal system protein TolB (443 aa).

The first 24 residues, 1-24 (MSFQIRVFTAILAVLSLFTAPVLA), serve as a signal peptide directing secretion. The interval 424–443 (LRPVRTPEGGSDPSWSPLQR) is disordered.

The protein belongs to the TolB family. The Tol-Pal system is composed of five core proteins: the inner membrane proteins TolA, TolQ and TolR, the periplasmic protein TolB and the outer membrane protein Pal. They form a network linking the inner and outer membranes and the peptidoglycan layer.

It is found in the periplasm. Its function is as follows. Part of the Tol-Pal system, which plays a role in outer membrane invagination during cell division and is important for maintaining outer membrane integrity. The chain is Tol-Pal system protein TolB from Roseobacter denitrificans (strain ATCC 33942 / OCh 114) (Erythrobacter sp. (strain OCh 114)).